A 141-amino-acid polypeptide reads, in one-letter code: Large ribosomal subunit protein uL11 (141 aa).

The protein belongs to the universal ribosomal protein uL11 family. In terms of assembly, part of the ribosomal stalk of the 50S ribosomal subunit. Interacts with L10 and the large rRNA to form the base of the stalk. L10 forms an elongated spine to which L12 dimers bind in a sequential fashion forming a multimeric L10(L12)X complex. Post-translationally, one or more lysine residues are methylated.

Forms part of the ribosomal stalk which helps the ribosome interact with GTP-bound translation factors. The protein is Large ribosomal subunit protein uL11 of Chlorobium luteolum (strain DSM 273 / BCRC 81028 / 2530) (Pelodictyon luteolum).